Consider the following 268-residue polypeptide: Nickel import ATP-binding protein NikE (268 aa).

Residues 4–252 enclose the ABC transporter domain; it reads LNVCGLSHHY…SSDAGRVLQN (249 aa). 45-52 is a binding site for ATP; sequence GRSGCGKS.

Belongs to the ABC transporter superfamily. Nickel importer (TC 3.A.1.5.3) family. As to quaternary structure, the complex is composed of two ATP-binding proteins (NikD and NikE), two transmembrane proteins (NikB and NikC) and a solute-binding protein (NikA).

It is found in the cell inner membrane. It carries out the reaction Ni(2+)(out) + ATP + H2O = Ni(2+)(in) + ADP + phosphate + H(+). In terms of biological role, part of the ABC transporter complex NikABCDE involved in nickel import. Responsible for energy coupling to the transport system. The polypeptide is Nickel import ATP-binding protein NikE (Shigella flexneri).